The sequence spans 488 residues: Glutamate--tRNA ligase (488 aa).

The short motif at 16–26 (PSPTGEPHVGT) is the 'HIGH' region element. The 'KMSKS' region signature appears at 257–261 (KLSKR). An ATP-binding site is contributed by K260.

Belongs to the class-I aminoacyl-tRNA synthetase family. Glutamate--tRNA ligase type 1 subfamily. In terms of assembly, monomer.

It is found in the cytoplasm. It carries out the reaction tRNA(Glu) + L-glutamate + ATP = L-glutamyl-tRNA(Glu) + AMP + diphosphate. Catalyzes the attachment of glutamate to tRNA(Glu) in a two-step reaction: glutamate is first activated by ATP to form Glu-AMP and then transferred to the acceptor end of tRNA(Glu). In Rhizobium etli (strain ATCC 51251 / DSM 11541 / JCM 21823 / NBRC 15573 / CFN 42), this protein is Glutamate--tRNA ligase.